The sequence spans 246 residues: Small ribosomal subunit protein uS2 (246 aa).

The protein belongs to the universal ribosomal protein uS2 family.

This Burkholderia cenocepacia (strain ATCC BAA-245 / DSM 16553 / LMG 16656 / NCTC 13227 / J2315 / CF5610) (Burkholderia cepacia (strain J2315)) protein is Small ribosomal subunit protein uS2.